A 135-amino-acid polypeptide reads, in one-letter code: Membrane-anchored ubiquitin-fold protein 4 (135 aa).

The tract at residues 1 to 20 (MAEKEEGKVAAEGGAEAEAD) is disordered. Residues 23 to 92 (VEVKFRLFDG…NDKNIAQCRA (70 aa)) enclose the Ubiquitin-like domain. Cysteine 132 carries the cysteine methyl ester modification. Residue cysteine 132 is the site of S-geranylgeranyl cysteine attachment. A propeptide spans 133-135 (TIL) (removed in mature form).

It is found in the cell membrane. In terms of biological role, may serve as docking site to facilitate the association of other proteins to the plasma membrane. In Oryza sativa subsp. japonica (Rice), this protein is Membrane-anchored ubiquitin-fold protein 4 (MUB4).